Here is a 120-residue protein sequence, read N- to C-terminus: Large ribosomal subunit protein uL18 (120 aa).

The interval 1–26 (MSKAKVTNARRKRSVRLKLRRSGGGR) is disordered. The span at 8-23 (NARRKRSVRLKLRRSG) shows a compositional bias: basic residues.

The protein belongs to the universal ribosomal protein uL18 family. As to quaternary structure, part of the 50S ribosomal subunit; part of the 5S rRNA/L5/L18/L25 subcomplex. Contacts the 5S and 23S rRNAs.

Its function is as follows. This is one of the proteins that bind and probably mediate the attachment of the 5S RNA into the large ribosomal subunit, where it forms part of the central protuberance. The polypeptide is Large ribosomal subunit protein uL18 (Bradyrhizobium diazoefficiens (strain JCM 10833 / BCRC 13528 / IAM 13628 / NBRC 14792 / USDA 110)).